Reading from the N-terminus, the 410-residue chain is Kelch domain-containing protein 10 (410 aa).

A disordered region spans residues 1–40 (MSAAQGWDRNRRRGGGAAGGASGVSGAGAAGGGRGTGQLN). R13 carries the omega-N-methylarginine modification. The span at 15-36 (GGAAGGASGVSGAGAAGGGRGT) shows a compositional bias: gly residues. 6 Kelch repeats span residues 87–154 (GPDN…DVHV), 155–198 (CNVK…GYIY), 199–260 (STDL…IHAY), 261–319 (NLET…LQTF), 320–364 (QWVK…GSLF), and 365–403 (KIWL…GLTQ). The interaction with CUL2 stretch occupies residues 369 to 410 (VVPSLLELAWEKLLAAFPNLANLSRTQLLHLGLTQELIERLK).

It belongs to the KLHDC10 family. Component of a CRL2 E3 ubiquitin-protein ligase complex, also named ECS (Elongin BC-CUL2/5-SOCS-box protein) complex, composed of CUL2, Elongin BC (ELOB and ELOC), RBX1 and substrate-specific adapter KLHDC10. Interacts (via the 6 Kelch repeats) with PPP5C.

It is found in the nucleus. The protein localises to the cytoplasm. The protein operates within protein modification; protein ubiquitination. Functionally, substrate-recognition component of a Cul2-RING (CRL2) E3 ubiquitin-protein ligase complex of the DesCEND (destruction via C-end degrons) pathway, which recognizes a C-degron located at the extreme C-terminus of target proteins, leading to their ubiquitination and degradation. The C-degron recognized by the DesCEND pathway is usually a motif of less than ten residues and can be present in full-length proteins, truncated proteins or proteolytically cleaved forms. The CRL2(KLHDC10) complex specifically recognizes proteins with a proline-glycine (Pro-Gly) or an alanine tail (CAT tail) at the C-terminus, leading to their ubiquitination and degradation. The CRL2(KLHDC10) complex is involved in the ribosome-associated quality control (RQC) pathway, which mediates the extraction of incompletely synthesized nascent chains from stalled ribosomes: CRL2(KLHDC10) acts downstream of NEMF and recognizes CAT tails associated with stalled nascent chains, leading to their ubiquitination and degradation. Participates in the oxidative stress-induced cell death through MAP3K5 activation. Inhibits PPP5C phosphatase activity on MAP3K5. Acts as a regulator of necroptosis. The sequence is that of Kelch domain-containing protein 10 from Rattus norvegicus (Rat).